The primary structure comprises 485 residues: Probable WRKY transcription factor 10 (485 aa).

Disordered stretches follow at residues 43-62 and 215-293; these read IFPQ…QRSG and ISIE…SKTQ. Acidic residues predominate over residues 216–264; that stretch reads SIEDSESEDGNKDDDDEDFQYEDEDEDQYDQDQDVDEDEEEEKDEDNVA. Positions 301-366 form a DNA-binding region, WRKY; it reads SDEDNPNDGY…YDGIHNHPSP (66 aa). Residues cysteine 332, cysteine 337, histidine 361, and histidine 363 each coordinate Zn(2+). The tract at residues 358–417 is disordered; the sequence is DGIHNHPSPPARRSNSSSRNRSAGATIPQNQNDRTSRLGRAPPTPTPPTPPPSSYTPEEM. The span at 368–380 shows a compositional bias: low complexity; sequence ARRSNSSSRNRSA. The span at 399–411 shows a compositional bias: pro residues; that stretch reads PPTPTPPTPPPSS.

The protein belongs to the WRKY group I family. As to quaternary structure, interacts with IKU1. In terms of tissue distribution, expressed in male gametophytes (pollen) and in the endosperm of fertilized ovules.

The protein localises to the nucleus. In terms of biological role, transcription factor. Interacts specifically with the W box (5'-(T)TGAC[CT]-3'), a frequently occurring elicitor-responsive cis-acting element. Modulates seed size by negatively regulating the cellularization of syncytial endosperm. The chain is Probable WRKY transcription factor 10 (WRKY10) from Arabidopsis thaliana (Mouse-ear cress).